Consider the following 296-residue polypeptide: GTPase Era (296 aa).

In terms of domain architecture, Era-type G spans 7 to 174; that stretch reads KCSMSAIVGA…VDYLCETSPY (168 aa). Positions 15 to 22 are G1; that stretch reads GATNAGKS. GTP is bound at residue 15–22; it reads GATNAGKS. Residues 41–45 form a G2 region; the sequence is QTTRV. A G3 region spans residues 62 to 65; that stretch reads DTPG. Residues 62 to 66 and 124 to 127 each bind GTP; these read DTPGI and NKID. Residues 124–127 are G4; that stretch reads NKID. The G5 stretch occupies residues 153-155; it reads ISA. The region spanning 205-282 is the KH type-2 domain; that stretch reads LRHELPYSLS…HLFLFVKVRE (78 aa).

This sequence belongs to the TRAFAC class TrmE-Era-EngA-EngB-Septin-like GTPase superfamily. Era GTPase family. As to quaternary structure, monomer.

It is found in the cytoplasm. It localises to the cell inner membrane. In terms of biological role, an essential GTPase that binds both GDP and GTP, with rapid nucleotide exchange. Plays a role in 16S rRNA processing and 30S ribosomal subunit biogenesis and possibly also in cell cycle regulation and energy metabolism. The chain is GTPase Era from Ehrlichia ruminantium (strain Welgevonden).